The following is a 456-amino-acid chain: Keratin, type I cytoskeletal 12 (456 aa).

Over residues 1–19 the composition is skewed to polar residues; that stretch reads MSLSVRTSALSRRSSSQNG. Residues 1–25 are disordered; it reads MSLSVRTSALSRRSSSQNGVAGRPW. A head region spans residues 1-114; sequence MSLSVRTSAL…GNDGGLLSGS (114 aa). Residues 115-150 are coil 1A; sequence EKETMQNLNDRLASYLGKVRALEEANAELENKIREW. In terms of domain architecture, IF rod spans 115–402; it reads EKETMQNLND…RLLEGDTQGD (288 aa). Residues 154-171 form a linker 1 region; sequence RRTGDSGSQSDYSKYYPL. The interval 172-263 is coil 1B; the sequence is IEDLKNKIIS…KNHEEELQSF (92 aa). Positions 264-286 are linker 12; the sequence is QAGGPGEVNVEMDAAPGVDLTKS. The interval 287-397 is coil 2; that stretch reads GELRKEINSN…IETYRRLLEG (111 aa). Residues 398 to 456 are tail; sequence DTQGDGFDESLSLTVSKPQAPSVDSSKDPNKTRKIKTVVQEIVNGEVVSSQVQELEEAM. A disordered region spans residues 405-430; it reads DESLSLTVSKPQAPSVDSSKDPNKTR. Residues 408–421 are compositionally biased toward polar residues; sequence LSLTVSKPQAPSVD.

Belongs to the intermediate filament family. As to quaternary structure, heterotetramer of two type I and two type II keratins. Keratin-3 associates with keratin-12.

Functionally, involved in corneal epithelium organization, integrity and corneal keratin expression. This Rattus norvegicus (Rat) protein is Keratin, type I cytoskeletal 12.